A 155-amino-acid chain; its full sequence is Ribonuclease H (155 aa).

Positions Glu-4–Thr-145 constitute an RNase H type-1 domain. Positions 13, 51, 73, and 137 each coordinate Mg(2+).

It belongs to the RNase H family. As to quaternary structure, monomer. Mg(2+) is required as a cofactor.

Its subcellular location is the cytoplasm. It catalyses the reaction Endonucleolytic cleavage to 5'-phosphomonoester.. Endonuclease that specifically degrades the RNA of RNA-DNA hybrids. The sequence is that of Ribonuclease H from Bartonella bacilliformis (strain ATCC 35685 / KC583 / Herrer 020/F12,63).